A 287-amino-acid polypeptide reads, in one-letter code: Putative S-adenosyl-L-methionine-dependent methyltransferase SACE_1742 (287 aa).

S-adenosyl-L-methionine-binding positions include D119 and 148–149 (DL).

It belongs to the UPF0677 family.

Exhibits S-adenosyl-L-methionine-dependent methyltransferase activity. The chain is Putative S-adenosyl-L-methionine-dependent methyltransferase SACE_1742 from Saccharopolyspora erythraea (strain ATCC 11635 / DSM 40517 / JCM 4748 / NBRC 13426 / NCIMB 8594 / NRRL 2338).